The chain runs to 498 residues: Glycerol kinase (498 aa).

T14 is an ADP binding site. Positions 14, 15, and 16 each coordinate ATP. T14 provides a ligand contact to sn-glycerol 3-phosphate. Residue R18 coordinates ADP. The sn-glycerol 3-phosphate site is built by R84, E85, Y136, and D245. Residues R84, E85, Y136, D245, and Q246 each contribute to the glycerol site. ADP contacts are provided by T267 and G310. T267, G310, Q314, and G410 together coordinate ATP. ADP is bound by residues G410 and N414.

Belongs to the FGGY kinase family.

It catalyses the reaction glycerol + ATP = sn-glycerol 3-phosphate + ADP + H(+). The protein operates within polyol metabolism; glycerol degradation via glycerol kinase pathway; sn-glycerol 3-phosphate from glycerol: step 1/1. Its activity is regulated as follows. Inhibited by fructose 1,6-bisphosphate (FBP). In terms of biological role, key enzyme in the regulation of glycerol uptake and metabolism. Catalyzes the phosphorylation of glycerol to yield sn-glycerol 3-phosphate. This is Glycerol kinase from Rhodospirillum centenum (strain ATCC 51521 / SW).